Consider the following 283-residue polypeptide: MQQFKWINILKGFAMGTSDLVPGVSGGTIALLLGIYNQFIASISGIFSRRFWPSFTFLIPIIIGMLLAMGSLSNLFNYLLSQHHIPTMFFFGGLIIGIVPYLLKISNYKTSFTTKHYMMVIAGIAILIVITLMNNGDKHAGETLTLSTSLIIKYFIAGMCASSAMLLPGISGSFMLLVFGVYGTVMLAISEVVKLNFAGLPILLAVGFGVLAGFIISSKIIQYFLTHHKLMTFALIIGFVVGSLFAVFPGLPTNIVMWFVSLVVFIIGFIVSLTLGRITAENE.

Helical transmembrane passes span glycine 27–phenylalanine 47, phenylalanine 51–serine 71, isoleucine 85–isoleucine 105, phenylalanine 112–leucine 132, threonine 148–proline 168, glycine 169–isoleucine 189, phenylalanine 197–serine 217, leucine 230–glycine 250, and isoleucine 255–leucine 275.

Belongs to the PopT family.

It localises to the cell membrane. With respect to regulation, active in alkaline conditions. Flippase that catalyzes the transport of undecaprenyl phosphate (UndP) across the cytoplasmic membrane, from the external side to the cytoplasmic side. Is involved in UndP recycling during peptidoglycan synthesis. Necessary for peptidoglycan maintenance. This chain is Polyprenyl-phosphate transporter, found in Staphylococcus aureus (strain NCTC 8325 / PS 47).